Reading from the N-terminus, the 160-residue chain is Cytochrome b6-f complex subunit 4 (160 aa).

The next 3 membrane-spanning stretches (helical) occupy residues 36–56 (LLYVFPVVIFGTIGLCTGLAI), 95–115 (LLGIACMAGVPLGLMLVPFIE), and 131–151 (AIFLFGTVVTIWLGIGATFPI).

This sequence belongs to the cytochrome b family. PetD subfamily. The 4 large subunits of the cytochrome b6-f complex are cytochrome b6, subunit IV (17 kDa polypeptide, PetD), cytochrome f and the Rieske protein, while the 4 small subunits are PetG, PetL, PetM and PetN. The complex functions as a dimer.

The protein resides in the cellular thylakoid membrane. Its function is as follows. Component of the cytochrome b6-f complex, which mediates electron transfer between photosystem II (PSII) and photosystem I (PSI), cyclic electron flow around PSI, and state transitions. In Microcystis aeruginosa (strain NIES-843 / IAM M-2473), this protein is Cytochrome b6-f complex subunit 4.